Here is a 119-residue protein sequence, read N- to C-terminus: Large ribosomal subunit protein bL20 (119 aa).

The protein belongs to the bacterial ribosomal protein bL20 family.

Binds directly to 23S ribosomal RNA and is necessary for the in vitro assembly process of the 50S ribosomal subunit. It is not involved in the protein synthesizing functions of that subunit. The protein is Large ribosomal subunit protein bL20 of Rhodopseudomonas palustris (strain BisB18).